The chain runs to 269 residues: Aquaporin-1 (269 aa).

Over 1–11 (MASEIKKKLFW) the chain is Cytoplasmic. The helical transmembrane segment at 12–29 (RAVVAEFLAMTLFVFISI) threads the bilayer. Residues 30–46 (GSALGFNYPLERNQTLV) are Extracellular-facing. The helical transmembrane segment at 47–65 (QDNVKVSLAFGLSIATLAQ) threads the bilayer. At 66–68 (SVG) the chain is on the cytoplasmic side. Residues 69-82 (HISGAHLNPAVTLG) lie within the membrane without spanning it. Residues 76–78 (NPA) carry the NPA 1 motif. The Cytoplasmic portion of the chain corresponds to 83 to 90 (LLLSCQIS). A helical transmembrane segment spans residues 91-109 (ILRAVMYIIAQCVGAIVAT). The Extracellular portion of the chain corresponds to 110-133 (AILSGITSSLVDNSLGRNDLAHGV). Residues 134–153 (NSGQGLGIEIIGTLQLVLCV) traverse the membrane as a helical segment. Residues 154-163 (LATTDRRRRD) are Cytoplasmic-facing. Residues 164 to 181 (LGGSAPLAIGLSVALGHL) form a helical membrane-spanning segment. The Extracellular segment spans residues 182–186 (LAIDY). An intramembrane segment occupies 187 to 199 (TGCGINPARSFGS). Positions 192 to 194 (NPA) match the NPA 2 motif. Residues 200-206 (AVLTRNF) are Extracellular-facing. N205 is a glycosylation site (N-linked (GlcNAc...) asparagine). The chain crosses the membrane as a helical span at residues 207-224 (SNHWIFWVGPFIGGALAV). Topologically, residues 225–269 (LIYDFILAPRSSDFTDRMKVWTSGQVEEYDLDADDINSRVEMKPK) are cytoplasmic. A Phosphoserine modification is found at S247. At Y253 the chain carries Phosphotyrosine. Phosphoserine is present on S262.

The protein belongs to the MIP/aquaporin (TC 1.A.8) family. As to quaternary structure, homotetramer; each monomer provides an independent water pore. Component of the ankyrin-1 complex in the erythrocyte, composed of ANK1, RHCE, RHAG, SLC4A1, EPB42, GYPA, GYPB and AQP1. Interacts with EPHB2; involved in endolymph production in the inner ear. Identified in a complex with STOM. Interacts (via the N-terminal) with ANK1 (via ANK 1-5 repeats). Interacts (via the C-terminal) with EPB42. Detected in erythrocytes (at protein level). In the kidney, expressed on luminal and basal borders of proximal tubules and in the thin limb of Henle's loop (at protein level).

The protein localises to the cell membrane. The enzyme catalyses H2O(in) = H2O(out). It catalyses the reaction nitric oxide(out) = nitric oxide(in). The catalysed reaction is CO2(out) = CO2(in). It carries out the reaction glycerol(in) = glycerol(out). The enzyme catalyses H2O2(out) = H2O2(in). It catalyses the reaction K(+)(in) = K(+)(out). The catalysed reaction is Na(+)(in) = Na(+)(out). Forms a water channel that facilitates the transport of water across cell membranes, playing a crucial role in water homeostasis in various tissues. Could also be permeable to small solutes including hydrogen peroxide, glycerol and gases such as amonnia (NH3), nitric oxide (NO) and carbon dioxide (CO2). Recruited to the ankyrin-1 complex, a multiprotein complex of the erythrocyte membrane, it could be part of a CO2 metabolon, linking facilitated diffusion of CO2 across the membrane, anion exchange of Cl(-)/HCO3(-) and interconversion of dissolved CO2 and carbonic acid in the cytosol. In vitro, it shows non-selective gated cation channel activity and may be permeable to cations like K(+) and Na(+) in vivo. The chain is Aquaporin-1 from Mus musculus (Mouse).